Here is a 264-residue protein sequence, read N- to C-terminus: Virulence plasmid protein pGP3-D (264 aa).

In Chlamydia psittaci (Chlamydophila psittaci), this protein is Virulence plasmid protein pGP3-D.